Reading from the N-terminus, the 181-residue chain is Dual-action ribosomal maturation protein DarP (181 aa).

The tract at residues 1–24 is disordered; that stretch reads MTGIKRPMSQYQDDNEWEDWGPSK.

Belongs to the DarP family.

Its subcellular location is the cytoplasm. In terms of biological role, member of a network of 50S ribosomal subunit biogenesis factors which assembles along the 30S-50S interface, preventing incorrect 23S rRNA structures from forming. Promotes peptidyl transferase center (PTC) maturation. The sequence is that of Dual-action ribosomal maturation protein DarP from Aeromonas hydrophila subsp. hydrophila (strain ATCC 7966 / DSM 30187 / BCRC 13018 / CCUG 14551 / JCM 1027 / KCTC 2358 / NCIMB 9240 / NCTC 8049).